We begin with the raw amino-acid sequence, 205 residues long: LexA repressor (205 aa).

Positions arginine 28–arginine 48 form a DNA-binding region, H-T-H motif. Active-site for autocatalytic cleavage activity residues include serine 120 and lysine 159.

This sequence belongs to the peptidase S24 family. Homodimer.

The catalysed reaction is Hydrolysis of Ala-|-Gly bond in repressor LexA.. Its function is as follows. Represses a number of genes involved in the response to DNA damage (SOS response), including recA and lexA. In the presence of single-stranded DNA, RecA interacts with LexA causing an autocatalytic cleavage which disrupts the DNA-binding part of LexA, leading to derepression of the SOS regulon and eventually DNA repair. This chain is LexA repressor, found in Acidithiobacillus ferrooxidans (strain ATCC 23270 / DSM 14882 / CIP 104768 / NCIMB 8455) (Ferrobacillus ferrooxidans (strain ATCC 23270)).